The sequence spans 741 residues: Transcription activator of gluconeogenesis BDBG_05438 (741 aa).

A disordered region spans residues 1 to 70; sequence MTASTRNGSP…NAKDPLRPRR (70 aa). Polar residues predominate over residues 25-61; sequence KSMTTTPANPPETKSQTNGKGSGTAQSSQKPASTSAN. The segment at residues 77-105 is a DNA-binding region (zn(2)-C6 fungal-type); that stretch reads CFACQRAHLTCGDERPCQRCIKRGLQDAC. Disordered stretches follow at residues 135–163, 202–239, 285–321, 401–421, 559–590, and 655–741; these read QANT…QSVS, SVFH…SVSG, GAGD…NNQS, TNLM…PGLK, GSSL…PHTG, and FHGK…AKRG. Over residues 202-226 the composition is skewed to polar residues; it reads SVFHAQSPSSTQNFDLSSNPQTQNL. Over residues 227-238 the composition is skewed to low complexity; sequence SSAMSQTASSVS. Composition is skewed to polar residues over residues 291-321 and 401-416; these read PSDS…NNQS and TNLM…SRIS. Low complexity predominate over residues 560-572; the sequence is SSLSSASSVRGSS. Over residues 573 to 586 the composition is skewed to polar residues; it reads TFTPRNNNTHNSID. The span at 672 to 718 shows a compositional bias: low complexity; that stretch reads TGTTTSGDVATTTATGTSTSNGANANTNGNNTNPNDPSTAASSSASS. Over residues 723–732 the composition is skewed to basic residues; it reads RSNHLGKRGG.

Belongs to the ERT1/acuK family.

It is found in the nucleus. In terms of biological role, transcription factor which regulates nonfermentable carbon utilization. Activator of gluconeogenetic genes. This Blastomyces gilchristii (strain SLH14081) (Blastomyces dermatitidis) protein is Transcription activator of gluconeogenesis BDBG_05438.